Reading from the N-terminus, the 141-residue chain is Putative pre-16S rRNA nuclease (141 aa).

It belongs to the YqgF nuclease family.

Its subcellular location is the cytoplasm. Could be a nuclease involved in processing of the 5'-end of pre-16S rRNA. The polypeptide is Putative pre-16S rRNA nuclease (Clostridioides difficile (strain 630) (Peptoclostridium difficile)).